We begin with the raw amino-acid sequence, 146 residues long: VHLTADEKAAVTGLWGKVNVDEVGGEALGRLLVVYPWTQRFFDSFGDLSAASAVMGNPKVKAHGKKVLNSFSDGLKNLDNLKGTYAKLSELHCDKLHVDPENFRLLGNVLVCVLARHFGKEFTPQVQAAYQKVVSGVATALAHKYH.

Val-1 is modified (N-acetylvaline). A Globin domain is found at 2–146 (HLTADEKAAV…VATALAHKYH (145 aa)). Thr-12 carries the phosphothreonine modification. Residue Ser-44 is modified to Phosphoserine. Lys-59 carries the N6-acetyllysine modification. His-63 serves as a coordination point for heme b. Lys-82 carries the N6-acetyllysine modification. Residue His-92 participates in heme b binding. Cys-93 is modified (S-nitrosocysteine). At Lys-144 the chain carries N6-acetyllysine.

It belongs to the globin family. As to quaternary structure, heterotetramer of two alpha chains and two beta chains. As to expression, red blood cells.

In terms of biological role, involved in oxygen transport from the lung to the various peripheral tissues. The chain is Hemoglobin subunit beta (HBB) from Taphozous georgianus (Sharp-nosed tomb bat).